A 447-amino-acid chain; its full sequence is Tubulin beta chain (447 aa).

The GTP site is built by Q11, E69, S138, G142, T143, G144, N204, and N226. E69 is a binding site for Mg(2+). The interval 427–447 is disordered; it reads DAGIDEEEEEYEEELPLEGEE. Acidic residues predominate over residues 429–447; that stretch reads GIDEEEEEYEEELPLEGEE.

It belongs to the tubulin family. As to quaternary structure, dimer of alpha and beta chains. A typical microtubule is a hollow water-filled tube with an outer diameter of 25 nm and an inner diameter of 15 nM. Alpha-beta heterodimers associate head-to-tail to form protofilaments running lengthwise along the microtubule wall with the beta-tubulin subunit facing the microtubule plus end conferring a structural polarity. Microtubules usually have 13 protofilaments but different protofilament numbers can be found in some organisms and specialized cells. The cofactor is Mg(2+).

Its subcellular location is the cytoplasm. The protein resides in the cytoskeleton. Tubulin is the major constituent of microtubules, a cylinder consisting of laterally associated linear protofilaments composed of alpha- and beta-tubulin heterodimers. Microtubules grow by the addition of GTP-tubulin dimers to the microtubule end, where a stabilizing cap forms. Below the cap, tubulin dimers are in GDP-bound state, owing to GTPase activity of alpha-tubulin. The sequence is that of Tubulin beta chain (TUB2) from Hapsidospora chrysogena (Acremonium chrysogenum).